Consider the following 103-residue polypeptide: N(4)-acetylcytidine amidohydrolase (103 aa).

In terms of domain architecture, ASCH spans 6-101 (ITFFQRFQDD…QTQFYVIEFK (96 aa)). Lys21 acts as the Proton acceptor in catalysis. The active-site Nucleophile is Thr24. The active-site Proton donor is the Glu74.

This sequence belongs to the N(4)-acetylcytidine amidohydrolase family.

The enzyme catalyses N(4)-acetylcytidine + H2O = cytidine + acetate + H(+). It catalyses the reaction N(4)-acetyl-2'-deoxycytidine + H2O = 2'-deoxycytidine + acetate + H(+). The catalysed reaction is N(4)-acetylcytosine + H2O = cytosine + acetate + H(+). Functionally, catalyzes the hydrolysis of N(4)-acetylcytidine (ac4C). This Escherichia coli O127:H6 (strain E2348/69 / EPEC) protein is N(4)-acetylcytidine amidohydrolase (yqfB).